The following is a 508-amino-acid chain: Glycerol kinase (508 aa).

Residue T17 participates in ADP binding. T17, T18, and S19 together coordinate ATP. T17 is a sn-glycerol 3-phosphate binding site. R21 provides a ligand contact to ADP. The sn-glycerol 3-phosphate site is built by R87, E88, Y139, and D256. The glycerol site is built by R87, E88, Y139, D256, and Q257. The ADP site is built by T278 and G322. The ATP site is built by T278, G322, Q326, and A423. ADP-binding residues include A423 and N427.

The protein belongs to the FGGY kinase family.

It carries out the reaction glycerol + ATP = sn-glycerol 3-phosphate + ADP + H(+). Its pathway is polyol metabolism; glycerol degradation via glycerol kinase pathway; sn-glycerol 3-phosphate from glycerol: step 1/1. Inhibited by fructose 1,6-bisphosphate (FBP). Functionally, key enzyme in the regulation of glycerol uptake and metabolism. Catalyzes the phosphorylation of glycerol to yield sn-glycerol 3-phosphate. The sequence is that of Glycerol kinase from Corynebacterium efficiens (strain DSM 44549 / YS-314 / AJ 12310 / JCM 11189 / NBRC 100395).